The sequence spans 211 residues: Cytochrome c biogenesis ATP-binding export protein CcmA (211 aa).

One can recognise an ABC transporter domain in the interval Met-1–Gly-211. Gly-33–Thr-40 contacts ATP.

It belongs to the ABC transporter superfamily. CcmA exporter (TC 3.A.1.107) family. The complex is composed of two ATP-binding proteins (CcmA) and two transmembrane proteins (CcmB).

It localises to the cell inner membrane. The enzyme catalyses heme b(in) + ATP + H2O = heme b(out) + ADP + phosphate + H(+). Functionally, part of the ABC transporter complex CcmAB involved in the biogenesis of c-type cytochromes; once thought to export heme, this seems not to be the case, but its exact role is uncertain. Responsible for energy coupling to the transport system. In Sodalis glossinidius (strain morsitans), this protein is Cytochrome c biogenesis ATP-binding export protein CcmA.